We begin with the raw amino-acid sequence, 116 residues long: Small ribosomal subunit protein uS8c (116 aa).

Belongs to the universal ribosomal protein uS8 family. Part of the 30S ribosomal subunit.

It is found in the plastid. Its subcellular location is the chloroplast. Functionally, one of the primary rRNA binding proteins, it binds directly to 16S rRNA central domain where it helps coordinate assembly of the platform of the 30S subunit. The protein is Small ribosomal subunit protein uS8c (rps8) of Musa acuminata (Banana).